Here is a 121-residue protein sequence, read N- to C-terminus: Ig heavy chain V region MPC 11 (121 aa).

The Ig-like domain occupies 1-112; it reads EAQLQQSGAE…NSSPYFDSWG (112 aa).

This Mus musculus (Mouse) protein is Ig heavy chain V region MPC 11.